We begin with the raw amino-acid sequence, 145 residues long: Large ribosomal subunit protein uL11 (145 aa).

The protein belongs to the universal ribosomal protein uL11 family. As to quaternary structure, part of the ribosomal stalk of the 50S ribosomal subunit. Interacts with L10 and the large rRNA to form the base of the stalk. L10 forms an elongated spine to which L12 dimers bind in a sequential fashion forming a multimeric L10(L12)X complex. Post-translationally, one or more lysine residues are methylated.

Functionally, forms part of the ribosomal stalk which helps the ribosome interact with GTP-bound translation factors. The polypeptide is Large ribosomal subunit protein uL11 (Rickettsia canadensis (strain McKiel)).